Reading from the N-terminus, the 382-residue chain is Nuclear hormone receptor family member nhr-106 (382 aa).

The nuclear receptor DNA-binding region spans 2 to 78 (QTTCEICEVP…MGMMPEKVKV (77 aa)). 2 NR C4-type zinc fingers span residues 5–25 (CEIC…CRGC) and 42–61 (CKYS…CKSC). An NR LBD domain is found at 110–380 (DVSNLITRGL…FSNPEMFIDS (271 aa)).

The protein belongs to the nuclear hormone receptor family.

The protein localises to the nucleus. Its function is as follows. Orphan nuclear receptor. The polypeptide is Nuclear hormone receptor family member nhr-106 (nhr-106) (Caenorhabditis elegans).